A 100-amino-acid chain; its full sequence is ESAT-6-like protein EsxB (100 aa).

A disordered region spans residues 80-100; sequence GTQYTSTDEDQAGTLASSMNI.

It belongs to the WXG100 family. CFP-10 subfamily. In terms of assembly, forms a tight 1:1 complex with EsxA. An artificial EsxA-EsxB heterodimer interacts with EspA.

The protein resides in the secreted. An exported protein. Plays a role in DNA conjugation, in at least a donor strain. The polypeptide is ESAT-6-like protein EsxB (Mycolicibacterium smegmatis (strain ATCC 700084 / mc(2)155) (Mycobacterium smegmatis)).